We begin with the raw amino-acid sequence, 168 residues long: Ecotin (168 aa).

The signal sequence occupies residues 1-21 (MKRLSIAITSLLMAASASTIA). Cysteines 76 and 113 form a disulfide.

The protein belongs to the protease inhibitor I11 (ecotin) family. Homodimer.

The protein localises to the periplasm. Functionally, general inhibitor of pancreatic serine proteases: inhibits chymotrypsin, trypsin, elastases, factor X, kallikrein as well as a variety of other proteases. In Yersinia enterocolitica serotype O:8 / biotype 1B (strain NCTC 13174 / 8081), this protein is Ecotin.